Reading from the N-terminus, the 396-residue chain is Small ribosomal subunit protein uS9m (396 aa).

N6-acetyllysine is present on Lys-287. Residues 374 to 396 (PRVRERKKPGQEGARRKFTWKKR) form a disordered region.

Belongs to the universal ribosomal protein uS9 family. In terms of assembly, component of the mitochondrial small ribosomal subunit (mt-SSU). Mature mammalian 55S mitochondrial ribosomes consist of a small (28S) and a large (39S) subunit. The 28S small subunit contains a 12S ribosomal RNA (12S mt-rRNA) and 30 different proteins. The 39S large subunit contains a 16S rRNA (16S mt-rRNA), a copy of mitochondrial valine transfer RNA (mt-tRNA(Val)), which plays an integral structural role, and 52 different proteins.

Its subcellular location is the mitochondrion. This is Small ribosomal subunit protein uS9m (MRPS9) from Homo sapiens (Human).